A 346-amino-acid chain; its full sequence is MPLVEAVTASSPSLADLGWSEFFGDQLEASDANLIPTRIAMVHRDRLSGLSQTGQTDLSLAPQATTGDYAVGDWVLVEPHSHLVQRRLTRKTVLERRVQGGRGPQLAAANVDTLFIVTSCNADFNIARLERYLALANEAGTTPVILLTKADTAEDAEAYRKQAAALQRELAVVTLNPRIPGAASALAAWCGAGQTVALIGSSGVGKSTLVNTLAGSAQQSPQQTGAIREHDAKGRHTTTARSLHAIAGGGWVIDTPGMRTLQVSDVGYGIDTLFAEITELAPLCKFRDCTHVHEPGCAVQAALKAGTLDPERLARWRKLSDENQHNTPVQSGPRGAKSPAGRGKRR.

One can recognise a CP-type G domain in the interval 98-261; it reads VQGGRGPQLA…VIDTPGMRTL (164 aa). Residues 148–151 and 200–208 contribute to the GTP site; these read TKAD and GSSGVGKST. Zn(2+) contacts are provided by cysteine 284, cysteine 289, histidine 291, and cysteine 297. The segment at 317 to 346 is disordered; the sequence is RKLSDENQHNTPVQSGPRGAKSPAGRGKRR.

This sequence belongs to the TRAFAC class YlqF/YawG GTPase family. RsgA subfamily. In terms of assembly, monomer. Associates with 30S ribosomal subunit, binds 16S rRNA. It depends on Zn(2+) as a cofactor.

Its subcellular location is the cytoplasm. Functionally, one of several proteins that assist in the late maturation steps of the functional core of the 30S ribosomal subunit. Helps release RbfA from mature subunits. May play a role in the assembly of ribosomal proteins into the subunit. Circularly permuted GTPase that catalyzes slow GTP hydrolysis, GTPase activity is stimulated by the 30S ribosomal subunit. The sequence is that of Small ribosomal subunit biogenesis GTPase RsgA from Mesorhizobium japonicum (strain LMG 29417 / CECT 9101 / MAFF 303099) (Mesorhizobium loti (strain MAFF 303099)).